The sequence spans 66 residues: Large ribosomal subunit protein bL35 (66 aa).

This sequence belongs to the bacterial ribosomal protein bL35 family.

The protein is Large ribosomal subunit protein bL35 of Treponema denticola (strain ATCC 35405 / DSM 14222 / CIP 103919 / JCM 8153 / KCTC 15104).